The following is an 890-amino-acid chain: Phosphatidate phosphatase LPIN1 (890 aa).

Residues 1 to 108 (MNYVGQLAGQ…IPMHLATSPI (108 aa)) form an N-LIP region. Ser-106 and Ser-150 each carry phosphoserine. Disordered stretches follow at residues 125–183 (VDRM…DMFP), 228–300 (SYPN…SSRK), 365–392 (KPPSASVVQTANKTDSPSRKRDKRSRHL), and 421–456 (SGLAKHASDNGARSANQSPQSVGSSGVDSGVESTSD). The segment covering 152–161 (VKKRRKRRRK) has biased composition (basic residues). The short motif at 153 to 158 (KKRRKR) is the Nuclear localization signal element. Composition is skewed to basic and acidic residues over residues 162 to 172 (SQLDSLKRDDN) and 252 to 265 (SDSELVSKSTERTG). Residues Ser-252, Ser-254, and Ser-260 each carry the phosphoserine modification. Thr-264 carries the post-translational modification Phosphothreonine. Phosphoserine is present on Ser-294. Position 425 is an N6-acetyllysine (Lys-425). The segment covering 431–440 (GARSANQSPQ) has biased composition (polar residues). A phosphoserine mark is found at Ser-434, Ser-438, and Ser-449. A compositionally biased stretch (low complexity) spans 441 to 456 (SVGSSGVDSGVESTSD). Lys-565 is covalently cross-linked (Glycyl lysine isopeptide (Lys-Gly) (interchain with G-Cter in SUMO)). Residues 566–616 (EESKPEQCLAGKAHSTGEQPPQLSLATRVKHESSSSDEERAAAKPSNAGHL) form a disordered region. Residues 581–590 (TGEQPPQLSL) show a composition bias toward polar residues. The span at 594 to 607 (VKHESSSSDEERAA) shows a compositional bias: basic and acidic residues. Lys-595 bears the N6-acetyllysine mark. Lys-595 participates in a covalent cross-link: Glycyl lysine isopeptide (Lys-Gly) (interchain with G-Cter in SUMO). 2 positions are modified to phosphoserine: Ser-600 and Ser-601. Positions 624–830 (YKKTLRLTSE…VNPKGELVQE (207 aa)) are C-LIP. Residues 678-682 (DIDGT) carry the DXDXT motif motif. The LXXIL motif signature appears at 689–693 (LGHIL). Phosphoserine is present on residues Ser-887 and Ser-889.

The protein belongs to the lipin family. In terms of assembly, interacts (via LXXIL motif) with PPARA. Interacts with PPARGC1A. Interaction with PPARA and PPARGC1A leads to the formation of a complex that modulates gene transcription. Interacts with MEF2C. The cofactor is Mg(2+). It depends on Mn(2+) as a cofactor. Post-translationally, phosphorylated at multiple sites by mTOR in response to insulin, leading to its inactivation. Phosphorylation does not affect the catalytic activity but regulates the localization. Phosphorylation is decreased by epinephrine. Dephosphorylated by the CTDNEP1-CNEP1R1 complex. Dephosphorylation following mTOR inhibition promotes its activity. Acetylation at Lys-425 and Lys-595 by KAT5 in response to fatty acids promotes translocation to the endoplasmic reticulum and synthesis of diacylglycerol. In terms of processing, sumoylated. Specifically expressed in skeletal muscle. Also abundant in adipose tissue. Lower levels in some portions of the digestive tract.

It localises to the cytoplasm. The protein resides in the cytosol. Its subcellular location is the endoplasmic reticulum membrane. It is found in the nucleus membrane. The catalysed reaction is a 1,2-diacyl-sn-glycero-3-phosphate + H2O = a 1,2-diacyl-sn-glycerol + phosphate. The enzyme catalyses 1-octadecanoyl-2-(4Z,7Z,10Z,13Z,16Z,19Z-docosahexaenoyl)-sn-glycero-3-phosphate + H2O = 1-octadecanoyl-2-(4Z,7Z,10Z,13Z,16Z,19Z-docosahexaenoyl)-sn-glycerol + phosphate. It carries out the reaction 1-octadecanoyl-2-(5Z,8Z,11Z,14Z-eicosatetraenoyl)-sn-glycero-3-phosphate + H2O = 1-octadecanoyl-2-(5Z,8Z,11Z,14Z-eicosatetraenoyl)-sn-glycerol + phosphate. It catalyses the reaction 1-octadecanoyl-2-(9Z,12Z-octadecadienoyl)-sn-glycero-3-phosphate + H2O = 1-octadecanoyl-2-(9Z,12Z)-octadecadienoyl-sn-glycerol + phosphate. The catalysed reaction is 1-octadecanoyl-2-(9Z-octadecenoyl)-sn-glycero-3-phosphate + H2O = 1-octadecanoyl-2-(9Z-octadecenoyl)-sn-glycerol + phosphate. The enzyme catalyses 1-hexadecanoyl-2-(4Z,7Z,10Z,13Z,16Z,19Z-docosahexaenoyl)-sn-glycero-3-phosphate + H2O = 1-hexadecanoyl-2-(4Z,7Z,10Z,13Z,16Z,19Z-docosahexaenoyl)-sn-glycerol + phosphate. It carries out the reaction 1,2-dioctadecanoyl-sn-glycero-3-phosphate + H2O = 1,2-dioctadecanoyl-sn-glycerol + phosphate. It catalyses the reaction 1-hexadecanoyl-2-(5Z,8Z,11Z,14Z-eicosatetraenoyl)-sn-glycero-3-phosphate + H2O = 1-hexadecanoyl-2-(5Z,8Z,11Z,14Z-eicosatetraenoyl)-sn-glycerol + phosphate. The catalysed reaction is 1-hexadecanoyl-2-(9Z,12Z-octadecadienoyl)-sn-glycero-3-phosphate + H2O = 1-hexadecanoyl-2-(9Z,12Z-octadecadienoyl)-sn-glycerol + phosphate. The enzyme catalyses 1-hexadecanoyl-2-(9Z-octadecenoyl)-sn-glycero-3-phosphate + H2O = 1-hexadecanoyl-2-(9Z-octadecenoyl)-sn-glycerol + phosphate. It carries out the reaction 1,2-di-(4Z,7Z,10Z,13Z,16Z,19Z-docosahexaenoyl)-sn-glycero-3-phosphate + H2O = 1,2-di-(4Z,7Z,10Z,13Z,16Z,19Z-docosahexaenoyl)-sn-glycerol + phosphate. It catalyses the reaction 1,2-di-(5Z,8Z,11Z,14Z)-eicosatetraenoyl-sn-glycero-3-phosphate + H2O = 1,2-di-(5Z,8Z,11Z,14Z)-eicosatetraenoyl-sn-glycerol + phosphate. The catalysed reaction is 1,2-di-(9Z,12Z-octadecadienoyl)-sn-glycero-3-phosphate + H2O = 1,2-di-(9Z,12Z-octadecadienoyl)-sn-glycerol + phosphate. The enzyme catalyses 1,2-di-(9Z-octadecenoyl)-sn-glycero-3-phosphate + H2O = 1,2-di-(9Z-octadecenoyl)-sn-glycerol + phosphate. It carries out the reaction 1,2-dihexadecanoyl-sn-glycero-3-phosphate + H2O = 1,2-dihexadecanoyl-sn-glycerol + phosphate. With respect to regulation, potently inhibited by sphingolipids, in particular, the sphingoid bases sphinganine and sphingosine and ceramide-1-phosphate. Inhibited by concentrations of Mg(2+) and Mn(2+) above their optimums and by Ca(2+), Zn(2+), N-ethylmaleimide and propranolol. Its activity is regulated as follows. Sertraline and propanolol inhibit activity in dose-dependent manners with IC(50) values of 103 uM and 226 uM, respectively. Sertraline and propanolol inhibit activity in dose-dependent manners with IC(50) values of 108 uM and 271 uM, respectively. With respect to regulation, sertraline and propanolol inhibit activity in dose-dependent manners with IC(50) values of 143 uM and 227 uM, respectively. In terms of biological role, acts as a magnesium-dependent phosphatidate phosphatase enzyme which catalyzes the conversion of phosphatidic acid to diacylglycerol during triglyceride, phosphatidylcholine and phosphatidylethanolamine biosynthesis and therefore controls the metabolism of fatty acids at different levels. Is involved in adipocyte differentiation. Recruited at the mitochondrion outer membrane and is involved in mitochondrial fission by converting phosphatidic acid to diacylglycerol. Acts also as nuclear transcriptional coactivator for PPARGC1A/PPARA regulatory pathway to modulate lipid metabolism gene expression. The polypeptide is Phosphatidate phosphatase LPIN1 (Homo sapiens (Human)).